A 182-amino-acid chain; its full sequence is Probable chorismate pyruvate-lyase (182 aa).

Residues R81, L119, and E171 each contribute to the substrate site.

The protein belongs to the UbiC family.

It localises to the cytoplasm. The enzyme catalyses chorismate = 4-hydroxybenzoate + pyruvate. The protein operates within cofactor biosynthesis; ubiquinone biosynthesis. Its function is as follows. Removes the pyruvyl group from chorismate, with concomitant aromatization of the ring, to provide 4-hydroxybenzoate (4HB) for the ubiquinone pathway. This is Probable chorismate pyruvate-lyase from Pseudomonas putida (Arthrobacter siderocapsulatus).